A 122-amino-acid chain; its full sequence is Double-headed protease inhibitor, submandibular gland (122 aa).

Kazal-like domains lie at 10–70 (GGRK…ECDI) and 71–121 (ECTQ…QCQS). 6 disulfide bridges follow: Cys16–Cys50, Cys28–Cys47, Cys36–Cys68, Cys72–Cys101, Cys79–Cys98, and Cys87–Cys119.

The protein resides in the secreted. Functionally, this inhibitor is composed of two homologous actively inhibiting halves: one which inhibits trypsin, the other which inhibits elastase. In Panthera uncia (Snow leopard), this protein is Double-headed protease inhibitor, submandibular gland.